Consider the following 33-residue polypeptide: MSDIN-like toxin proprotein 5 (33 aa).

The propeptide occupies 1–10 (MSDINATRLP). A cross-link (cyclopeptide (Ile-Pro)) is located at residues 11–18 (IFWFIYFP). Positions 19–32 (CVGDNVDNTLTRGE) are excised as a propeptide.

This sequence belongs to the MSDIN fungal toxin family. Post-translationally, processed by the macrocyclase-peptidase enzyme POPB to yield a toxic cyclic octapeptide. POPB first removes 10 residues from the N-terminus. Conformational trapping of the remaining peptide forces the enzyme to release this intermediate rather than proceed to macrocyclization. The enzyme rebinds the remaining peptide in a different conformation and catalyzes macrocyclization of the N-terminal 8 residues.

In terms of biological role, probable toxin that belongs to the MSDIN-like toxin family responsible for a large number of food poisoning cases and deaths. The polypeptide is MSDIN-like toxin proprotein 5 (Amanita phalloides (Death cap)).